A 385-amino-acid chain; its full sequence is ATP phosphoribosyltransferase regulatory subunit (385 aa).

The protein belongs to the class-II aminoacyl-tRNA synthetase family. HisZ subfamily. In terms of assembly, heteromultimer composed of HisG and HisZ subunits.

It is found in the cytoplasm. The protein operates within amino-acid biosynthesis; L-histidine biosynthesis; L-histidine from 5-phospho-alpha-D-ribose 1-diphosphate: step 1/9. Its function is as follows. Required for the first step of histidine biosynthesis. May allow the feedback regulation of ATP phosphoribosyltransferase activity by histidine. The chain is ATP phosphoribosyltransferase regulatory subunit from Bordetella pertussis (strain Tohama I / ATCC BAA-589 / NCTC 13251).